Reading from the N-terminus, the 484-residue chain is Membrane-bound lytic murein transglycosylase F (484 aa).

A signal peptide spans 1–18 (MKGLLLRIIAAFALVLWA). Residues 19–267 (IDMVFPWQQM…RIEEKYFNHF (249 aa)) form a non-LT domain region. Positions 268–484 (SQFDYVDMRQ…PLTDNQEKQE (217 aa)) are LT domain. The active site involves glutamate 312. Residues 459 to 484 (ADNKDKPSETDENLPLPLTDNQEKQE) form a disordered region.

The protein in the N-terminal section; belongs to the bacterial solute-binding protein 3 family. It in the C-terminal section; belongs to the transglycosylase Slt family.

Its subcellular location is the cell outer membrane. The catalysed reaction is Exolytic cleavage of the (1-&gt;4)-beta-glycosidic linkage between N-acetylmuramic acid (MurNAc) and N-acetylglucosamine (GlcNAc) residues in peptidoglycan, from either the reducing or the non-reducing ends of the peptidoglycan chains, with concomitant formation of a 1,6-anhydrobond in the MurNAc residue.. Functionally, murein-degrading enzyme that degrades murein glycan strands and insoluble, high-molecular weight murein sacculi, with the concomitant formation of a 1,6-anhydromuramoyl product. Lytic transglycosylases (LTs) play an integral role in the metabolism of the peptidoglycan (PG) sacculus. Their lytic action creates space within the PG sacculus to allow for its expansion as well as for the insertion of various structures such as secretion systems and flagella. This is Membrane-bound lytic murein transglycosylase F from Mannheimia succiniciproducens (strain KCTC 0769BP / MBEL55E).